The sequence spans 448 residues: Phosphohexose mutases (448 aa).

The active-site Phosphoserine intermediate is the serine 97. Positions 97, 237, 239, and 241 each coordinate Mg(2+).

This sequence belongs to the phosphohexose mutase family. Mg(2+) is required as a cofactor.

It catalyses the reaction alpha-D-glucose 1-phosphate = alpha-D-glucose 6-phosphate. The enzyme catalyses alpha-D-mannose 1-phosphate = D-mannose 6-phosphate. Its pathway is nucleotide-sugar biosynthesis; GDP-alpha-D-mannose biosynthesis; alpha-D-mannose 1-phosphate from D-fructose 6-phosphate: step 2/2. In terms of biological role, involved in xanthan production. The polypeptide is Phosphohexose mutases (xanA) (Xanthomonas campestris pv. campestris (strain B100)).